Reading from the N-terminus, the 555-residue chain is CTP synthase (555 aa).

The tract at residues 1-265 (MTRYIFITGG…GNRVCEKLNI (265 aa)) is amidoligase domain. Ser-13 is a CTP binding site. Position 13 (Ser-13) interacts with UTP. ATP contacts are provided by residues 14–19 (SLGKGI) and Asp-71. Positions 71 and 139 each coordinate Mg(2+). Residues 146-148 (DIE), 186-191 (KTKPTQ), and Lys-222 each bind CTP. UTP is bound by residues 186-191 (KTKPTQ) and Lys-222. The region spanning 290–541 (TVAVVGKYVD…IKAGLAAKEA (252 aa)) is the Glutamine amidotransferase type-1 domain. Residue Gly-351 participates in L-glutamine binding. The active-site Nucleophile; for glutamine hydrolysis is the Cys-378. Residues 379–382 (LGMQ), Glu-402, and Arg-469 contribute to the L-glutamine site. Catalysis depends on residues His-514 and Glu-516.

The protein belongs to the CTP synthase family. In terms of assembly, homotetramer.

The enzyme catalyses UTP + L-glutamine + ATP + H2O = CTP + L-glutamate + ADP + phosphate + 2 H(+). The catalysed reaction is L-glutamine + H2O = L-glutamate + NH4(+). It carries out the reaction UTP + NH4(+) + ATP = CTP + ADP + phosphate + 2 H(+). It functions in the pathway pyrimidine metabolism; CTP biosynthesis via de novo pathway; CTP from UDP: step 2/2. With respect to regulation, allosterically activated by GTP, when glutamine is the substrate; GTP has no effect on the reaction when ammonia is the substrate. The allosteric effector GTP functions by stabilizing the protein conformation that binds the tetrahedral intermediate(s) formed during glutamine hydrolysis. Inhibited by the product CTP, via allosteric rather than competitive inhibition. Catalyzes the ATP-dependent amination of UTP to CTP with either L-glutamine or ammonia as the source of nitrogen. Regulates intracellular CTP levels through interactions with the four ribonucleotide triphosphates. The polypeptide is CTP synthase (Coxiella burnetii (strain CbuG_Q212) (Coxiella burnetii (strain Q212))).